The chain runs to 212 residues: uncharacterized protein (212 aa).

Helical transmembrane passes span 20–40, 70–90, 155–175, and 192–212; these read FLIGFFTEYGYWAVLFVLIIC, LMLLVSMIGVLAGDSCMYWLG, FVLIDFCAAIISVPIWIYLGE, and QIVIYIFIGYLYYSFLEMEKI.

It belongs to the DedA family.

It localises to the cell membrane. This is an uncharacterized protein from Haemophilus influenzae (strain ATCC 51907 / DSM 11121 / KW20 / Rd).